A 464-amino-acid polypeptide reads, in one-letter code: Cysteine--tRNA ligase (464 aa).

Cysteine 29 serves as a coordination point for Zn(2+). The 'HIGH' region motif lies at 31-41; the sequence is ATVQGVPHIGH. The tract at residues 160 to 180 is disordered; the sequence is RLDEVQQGESTASGKRDPRDF. Residues cysteine 208, histidine 233, and glutamate 237 each coordinate Zn(2+). A 'KMSKS' region motif is present at residues 264-268; it reads KMSKS. Lysine 267 serves as a coordination point for ATP.

This sequence belongs to the class-I aminoacyl-tRNA synthetase family. Monomer. Zn(2+) serves as cofactor.

It localises to the cytoplasm. It carries out the reaction tRNA(Cys) + L-cysteine + ATP = L-cysteinyl-tRNA(Cys) + AMP + diphosphate. The protein is Cysteine--tRNA ligase of Saccharopolyspora erythraea (strain ATCC 11635 / DSM 40517 / JCM 4748 / NBRC 13426 / NCIMB 8594 / NRRL 2338).